The following is a 1840-amino-acid chain: Collagen alpha-1(V) chain (1840 aa).

An N-terminal signal peptide occupies residues 1–30 (MDVHTRWKAPRPGAPLLSSPLLLLLLLLWA). The region spanning 72–244 (DVAYRVSKDA…DYCEHYSPDC (173 aa)) is the Laminin G-like domain. Residues 231–445 (RAAYDYCEHY…MPANQDTIYE (215 aa)) form a nonhelical region region. Sulfotyrosine is present on residues Y234, Y236, Y240, Y262, Y263, Y336, Y338, and Y344. Disordered stretches follow at residues 241–547 (SPDC…QESQ) and 561–1576 (GPAG…EVIQ). Residues 258 to 268 (NPDEYYPEGEG) show a composition bias toward acidic residues. 3 stretches are compositionally biased toward low complexity: residues 335 to 352 (DYDY…PYED), 375 to 387 (PTST…SSNP), and 462 to 471 (IIEPGMLIEG). Residues 446-560 (GIGGPRGEKG…ILQQARLALR (115 aa)) form an interrupted collagenous region region. The segment covering 472 to 487 (PPGPEGPAGLPGPPGT) has biased composition (pro residues). 2 stretches are compositionally biased toward low complexity: residues 508–525 (LPGA…LMLP) and 561–572 (GPAGPMGLTGRP). The interval 561–1572 (GPAGPMGLTG…GLPGPPGPPG (1012 aa)) is triple-helical region. 4-hydroxyproline is present on residues P572, P578, and P623. At K629 the chain carries 5-hydroxylysine. P641 carries the 4-hydroxyproline modification. K644 carries the post-translational modification 5-hydroxylysine. 4-hydroxyproline is present on residues P650, P656, P659, P677, and P680. The span at 673-688 (PRGLPGEPGPRGLLGP) shows a compositional bias: low complexity. A 3-hydroxyproline mark is found at P682 and P688. Residues 689–698 (KGPPGPPGPP) are compositionally biased toward pro residues. P692, P698, and P707 each carry 4-hydroxyproline. K710 carries the 5-hydroxylysine modification. 4-hydroxyproline occurs at positions 719, 722, 728, and 734. Residues 724-743 (QQGNPGAQGLPGPQGAIGPP) show a composition bias toward low complexity. The residue at position 746 (K746) is a 5-hydroxylysine. The segment covering 749 to 758 (LGKPGLPGMP) has biased composition (low complexity). A 4-hydroxyproline mark is found at P752, P758, P764, P767, and P773. Residue K776 is modified to 5-hydroxylysine. 4-hydroxyproline is present on residues P782 and P791. 4 positions are modified to 5-hydroxylysine: K797, K806, K809, and K812. P818 is subject to 4-hydroxyproline. K821 is subject to 5-hydroxylysine. P836 is modified (4-hydroxyproline). Basic and acidic residues predominate over residues 839–848 (RGEDGPEGPK). K848 and K866 each carry 5-hydroxylysine. 4-hydroxyproline is present on residues P872, P875, and P878. 5-hydroxylysine is present on K884. 2 positions are modified to 4-hydroxyproline: P890 and P893. At K899 the chain carries 5-hydroxylysine. A 4-hydroxyproline mark is found at P905 and P908. Over residues 910-919 (PRGQRGPTGP) the composition is skewed to low complexity. P932 and P947 each carry 4-hydroxyproline. Low complexity-rich tracts occupy residues 973–992 (KDGL…QGKT) and 1001–1013 (VGPQ…TGPM). Residues P1019, P1022, P1025, and P1031 each carry the 4-hydroxyproline modification. Residues 1090 to 1106 (SPGERGPAGAAGPIGIP) are compositionally biased toward low complexity. The segment covering 1108-1117 (RPGPQGPPGP) has biased composition (pro residues). P1223 and P1226 each carry 4-hydroxyproline. A compositionally biased stretch (low complexity) spans 1261 to 1270 (PSGAPGADGP). The span at 1296-1305 (GLPGEGGPLG) shows a compositional bias: gly residues. Pro residues-rich tracts occupy residues 1382-1400 (TGEP…PGPA) and 1456-1471 (SPGP…PPGL). A 4-hydroxyproline mark is found at P1469 and P1472. The span at 1487–1496 (PGLIGLIGPP) shows a compositional bias: low complexity. Over residues 1528–1543 (PLGPPGPPGLPGPPGP) the composition is skewed to pro residues. The span at 1544-1556 (KGAKGSSGPTGPK) shows a compositional bias: low complexity. The segment at 1573–1607 (EVIQPLPIQASRTRRNIDASQLLDDGAGESYVDYA) is nonhelical region. Residues Y1603 and Y1606 each carry the sulfotyrosine modification. The region spanning 1611 to 1839 (EEIFGSLNSL…GFEVGPACFL (229 aa)) is the Fibrillar collagen NC1 domain.

The protein belongs to the fibrillar collagen family. As to quaternary structure, trimers of two alpha 1(V) and one alpha 2(V) chains in most tissues and trimers of one alpha 1(V), one alpha 2(V), and one alpha 3(V) chains in placenta. Interacts with CSPG4. Post-translationally, prolines at the third position of the tripeptide repeating unit (G-X-Y) are hydroxylated in some or all of the chains. In terms of processing, sulfated on 40% of tyrosines. Hydroxylation on proline residues within the sequence motif, GXPG, is most likely to be 4-hydroxy as this fits the requirement for 4-hydroxylation in vertebrates. In terms of tissue distribution, a high molecular weight form was detected in Schwann cells and peripheral nerve. A lower, probably processed form, is detected in all other tissues tested (at protein level).

The protein resides in the secreted. Its subcellular location is the extracellular space. It is found in the extracellular matrix. Functionally, type V collagen is a member of group I collagen (fibrillar forming collagen). It is a minor connective tissue component of nearly ubiquitous distribution. Type V collagen binds to DNA, heparan sulfate, thrombospondin, heparin, and insulin. This is Collagen alpha-1(V) chain (Col5a1) from Rattus norvegicus (Rat).